We begin with the raw amino-acid sequence, 440 residues long: 23S rRNA (uracil(1939)-C(5))-methyltransferase RlmD (440 aa).

Residues 11 to 69 (STLDTKHQPVTIERLDHQGSGLAFLHKKPLFVDGALPGEEVLIQLTENKSKYARGQLIK) form the TRAM domain. [4Fe-4S] cluster-binding residues include Cys82, Cys88, Cys91, and Cys169. The S-adenosyl-L-methionine site is built by Gln272, Phe301, Asn306, Glu322, Asn349, and Asp370. Residue Cys396 is the Nucleophile of the active site.

It belongs to the class I-like SAM-binding methyltransferase superfamily. RNA M5U methyltransferase family. RlmD subfamily.

It carries out the reaction uridine(1939) in 23S rRNA + S-adenosyl-L-methionine = 5-methyluridine(1939) in 23S rRNA + S-adenosyl-L-homocysteine + H(+). Catalyzes the formation of 5-methyl-uridine at position 1939 (m5U1939) in 23S rRNA. This chain is 23S rRNA (uracil(1939)-C(5))-methyltransferase RlmD, found in Vibrio cholerae serotype O1 (strain ATCC 39541 / Classical Ogawa 395 / O395).